The chain runs to 590 residues: Aspartate--tRNA ligase (590 aa).

L-aspartate is bound at residue Glu174. The tract at residues 198–201 (QLMK) is aspartate. Arg220 is an L-aspartate binding site. Residues 220–222 (RDE) and Gln229 contribute to the ATP site. His443 contacts L-aspartate. Glu484 contacts ATP. L-aspartate is bound at residue Arg491. 536–539 (GLDR) contributes to the ATP binding site.

Belongs to the class-II aminoacyl-tRNA synthetase family. Type 1 subfamily. As to quaternary structure, homodimer.

Its subcellular location is the cytoplasm. The enzyme catalyses tRNA(Asp) + L-aspartate + ATP = L-aspartyl-tRNA(Asp) + AMP + diphosphate. Functionally, catalyzes the attachment of L-aspartate to tRNA(Asp) in a two-step reaction: L-aspartate is first activated by ATP to form Asp-AMP and then transferred to the acceptor end of tRNA(Asp). The polypeptide is Aspartate--tRNA ligase (Lactococcus lactis subsp. cremoris (strain SK11)).